Reading from the N-terminus, the 279-residue chain is Acetyl-coenzyme A carboxylase carboxyl transferase subunit beta (279 aa).

Residues 23–279 (LWSKCDECGA…LIKLFKHLRG (257 aa)) enclose the CoA carboxyltransferase N-terminal domain. Residues cysteine 27, cysteine 30, cysteine 46, and cysteine 49 each contribute to the Zn(2+) site. A C4-type zinc finger spans residues 27–49 (CDECGAALHKKQLEDHLYTCPEC).

This sequence belongs to the AccD/PCCB family. Acetyl-CoA carboxylase is a heterohexamer composed of biotin carboxyl carrier protein (AccB), biotin carboxylase (AccC) and two subunits each of ACCase subunit alpha (AccA) and ACCase subunit beta (AccD). The cofactor is Zn(2+).

The protein localises to the cytoplasm. It carries out the reaction N(6)-carboxybiotinyl-L-lysyl-[protein] + acetyl-CoA = N(6)-biotinyl-L-lysyl-[protein] + malonyl-CoA. Its pathway is lipid metabolism; malonyl-CoA biosynthesis; malonyl-CoA from acetyl-CoA: step 1/1. Component of the acetyl coenzyme A carboxylase (ACC) complex. Biotin carboxylase (BC) catalyzes the carboxylation of biotin on its carrier protein (BCCP) and then the CO(2) group is transferred by the transcarboxylase to acetyl-CoA to form malonyl-CoA. The chain is Acetyl-coenzyme A carboxylase carboxyl transferase subunit beta from Chlorobaculum parvum (strain DSM 263 / NCIMB 8327) (Chlorobium vibrioforme subsp. thiosulfatophilum).